The sequence spans 237 residues: Uridylate kinase (237 aa).

12 to 15 is a binding site for ATP; that stretch reads KLSG. The segment at 20–25 is involved in allosteric activation by GTP; that stretch reads GEDGLG. UMP is bound at residue Gly-54. ATP is bound by residues Gly-55 and Arg-59. UMP contacts are provided by residues Asp-74 and 135-142; that span reads TGNPFFTT. Thr-162, Tyr-168, and Asp-171 together coordinate ATP.

This sequence belongs to the UMP kinase family. As to quaternary structure, homohexamer.

The protein localises to the cytoplasm. The enzyme catalyses UMP + ATP = UDP + ADP. It participates in pyrimidine metabolism; CTP biosynthesis via de novo pathway; UDP from UMP (UMPK route): step 1/1. Its activity is regulated as follows. Allosterically activated by GTP. Inhibited by UTP. Its function is as follows. Catalyzes the reversible phosphorylation of UMP to UDP. The protein is Uridylate kinase of Haemophilus influenzae (strain PittEE).